Here is a 78-residue protein sequence, read N- to C-terminus: UPF0349 protein BH3414 (78 aa).

It belongs to the UPF0349 family.

This is UPF0349 protein BH3414 from Halalkalibacterium halodurans (strain ATCC BAA-125 / DSM 18197 / FERM 7344 / JCM 9153 / C-125) (Bacillus halodurans).